The chain runs to 288 residues: UDP-3-O-acyl-N-acetylglucosamine deacetylase (288 aa).

Residues His79, His236, and Asp240 each contribute to the Zn(2+) site. The active-site Proton donor is the His263.

Belongs to the LpxC family. The cofactor is Zn(2+).

It catalyses the reaction a UDP-3-O-[(3R)-3-hydroxyacyl]-N-acetyl-alpha-D-glucosamine + H2O = a UDP-3-O-[(3R)-3-hydroxyacyl]-alpha-D-glucosamine + acetate. Its pathway is glycolipid biosynthesis; lipid IV(A) biosynthesis; lipid IV(A) from (3R)-3-hydroxytetradecanoyl-[acyl-carrier-protein] and UDP-N-acetyl-alpha-D-glucosamine: step 2/6. In terms of biological role, catalyzes the hydrolysis of UDP-3-O-myristoyl-N-acetylglucosamine to form UDP-3-O-myristoylglucosamine and acetate, the committed step in lipid A biosynthesis. The protein is UDP-3-O-acyl-N-acetylglucosamine deacetylase of Rickettsia africae (strain ESF-5).